A 154-amino-acid polypeptide reads, in one-letter code: Glycosylation-dependent cell adhesion molecule 1 (154 aa).

Residues 1 to 18 (MKFLCILLLASLAATSLA) form the signal peptide. O-linked (GalNAc...) threonine; partial glycosylation is present at T34. A phosphoserine mark is found at S48, S53, S57, S59, and S65. Basic and acidic residues predominate over residues 51-65 (DLSKEPSISREDLIS). Residues 51-115 (DLSKEPSISR…EHAPSDASTT (65 aa)) are disordered. An N-linked (GlcNAc...) asparagine glycan is attached at N96.

It belongs to the PP3/GlyCAM-1 family. Highly and specifically expressed in the lactating mammary gland.

The protein localises to the membrane. The protein is Glycosylation-dependent cell adhesion molecule 1 (GLYCAM1) of Capra hircus (Goat).